Reading from the N-terminus, the 155-residue chain is Protein-export protein SecB 1 (155 aa).

The protein belongs to the SecB family. In terms of assembly, homotetramer, a dimer of dimers. One homotetramer interacts with 1 SecA dimer.

It localises to the cytoplasm. One of the proteins required for the normal export of preproteins out of the cell cytoplasm. It is a molecular chaperone that binds to a subset of precursor proteins, maintaining them in a translocation-competent state. It also specifically binds to its receptor SecA. In Polaromonas naphthalenivorans (strain CJ2), this protein is Protein-export protein SecB 1.